The sequence spans 353 residues: Photosystem II protein D1 (353 aa).

Thr-2 carries the N-acetylthreonine modification. Thr-2 carries the phosphothreonine modification. 3 helical membrane-spanning segments follow: residues 29–46, 118–133, and 142–156; these read YIGWFGVLMIPTLLTATS, HFLLGVACYMGREWEL, and WIAVAYSAPVAAATA. His-118 serves as a coordination point for chlorophyll a. Tyr-126 serves as a coordination point for pheophytin a. Asp-170 and Glu-189 together coordinate [CaMn4O5] cluster. A helical transmembrane segment spans residues 197–218; it reads FHMLGVAGVFGGSLFSAMHGSL. Chlorophyll a is bound at residue His-198. A quinone is bound by residues His-215 and 264 to 265; that span reads SF. His-215 contributes to the Fe cation binding site. His-272 contacts Fe cation. Residues 274-288 traverse the membrane as a helical segment; sequence FLAAWPVVGIWFTAL. Residues His-332, Glu-333, Asp-342, and Ala-344 each contribute to the [CaMn4O5] cluster site. A propeptide spanning residues 345 to 353 is cleaved from the precursor; it reads AVEAPSING.

The protein belongs to the reaction center PufL/M/PsbA/D family. PSII is composed of 1 copy each of membrane proteins PsbA, PsbB, PsbC, PsbD, PsbE, PsbF, PsbH, PsbI, PsbJ, PsbK, PsbL, PsbM, PsbT, PsbX, PsbY, PsbZ, Psb30/Ycf12, at least 3 peripheral proteins of the oxygen-evolving complex and a large number of cofactors. It forms dimeric complexes. The D1/D2 heterodimer binds P680, chlorophylls that are the primary electron donor of PSII, and subsequent electron acceptors. It shares a non-heme iron and each subunit binds pheophytin, quinone, additional chlorophylls, carotenoids and lipids. D1 provides most of the ligands for the Mn4-Ca-O5 cluster of the oxygen-evolving complex (OEC). There is also a Cl(-1) ion associated with D1 and D2, which is required for oxygen evolution. The PSII complex binds additional chlorophylls, carotenoids and specific lipids. is required as a cofactor. Post-translationally, tyr-161 forms a radical intermediate that is referred to as redox-active TyrZ, YZ or Y-Z. In terms of processing, C-terminally processed by CTPA; processing is essential to allow assembly of the oxygen-evolving complex and thus photosynthetic growth.

The protein resides in the plastid. Its subcellular location is the chloroplast thylakoid membrane. It carries out the reaction 2 a plastoquinone + 4 hnu + 2 H2O = 2 a plastoquinol + O2. Photosystem II (PSII) is a light-driven water:plastoquinone oxidoreductase that uses light energy to abstract electrons from H(2)O, generating O(2) and a proton gradient subsequently used for ATP formation. It consists of a core antenna complex that captures photons, and an electron transfer chain that converts photonic excitation into a charge separation. The D1/D2 (PsbA/PsbD) reaction center heterodimer binds P680, the primary electron donor of PSII as well as several subsequent electron acceptors. The protein is Photosystem II protein D1 of Medicago sativa (Alfalfa).